Reading from the N-terminus, the 145-residue chain is Ribosomal protein uL24-like (145 aa).

2 disordered regions span residues 1–21 (MKFNPFVTSDRSKNRKRHFNA) and 122–145 (KAKSRQVGKEKGKYKEELIEKMQE). Glycyl lysine isopeptide (Lys-Gly) (interchain with G-Cter in SUMO2) cross-links involve residues K136 and K142.

Belongs to the universal ribosomal protein uL24 family.

In Homo sapiens (Human), this protein is Ribosomal protein uL24-like (RPL26L1).